The following is a 421-amino-acid chain: UDP-N-acetylglucosamine 1-carboxyvinyltransferase (421 aa).

Residue 22–23 (KN) participates in phosphoenolpyruvate binding. Residue Arg93 participates in UDP-N-acetyl-alpha-D-glucosamine binding. The active-site Proton donor is the Cys117. Cys117 is subject to 2-(S-cysteinyl)pyruvic acid O-phosphothioketal. Residues 122–126 (RPVDL), Asp308, and Val330 each bind UDP-N-acetyl-alpha-D-glucosamine.

The protein belongs to the EPSP synthase family. MurA subfamily.

It is found in the cytoplasm. It carries out the reaction phosphoenolpyruvate + UDP-N-acetyl-alpha-D-glucosamine = UDP-N-acetyl-3-O-(1-carboxyvinyl)-alpha-D-glucosamine + phosphate. It participates in cell wall biogenesis; peptidoglycan biosynthesis. Cell wall formation. Adds enolpyruvyl to UDP-N-acetylglucosamine. The protein is UDP-N-acetylglucosamine 1-carboxyvinyltransferase of Pseudomonas paraeruginosa (strain DSM 24068 / PA7) (Pseudomonas aeruginosa (strain PA7)).